The chain runs to 110 residues: Large ribosomal subunit protein uL22 (110 aa).

Belongs to the universal ribosomal protein uL22 family. In terms of assembly, part of the 50S ribosomal subunit.

Functionally, this protein binds specifically to 23S rRNA; its binding is stimulated by other ribosomal proteins, e.g. L4, L17, and L20. It is important during the early stages of 50S assembly. It makes multiple contacts with different domains of the 23S rRNA in the assembled 50S subunit and ribosome. The globular domain of the protein is located near the polypeptide exit tunnel on the outside of the subunit, while an extended beta-hairpin is found that lines the wall of the exit tunnel in the center of the 70S ribosome. In Yersinia pseudotuberculosis serotype O:1b (strain IP 31758), this protein is Large ribosomal subunit protein uL22.